A 379-amino-acid polypeptide reads, in one-letter code: MAISALIEEFQKVSASPKTMLAKYKAQGKKAIGCLPYYVPEELVYAAGMVPMGVWGCNGKQEVRSKEYCASFYCTIAQQSLEMLLDGTLDGLDGIITPVLCDTLRPMSQNFKVAMKDKMPVIFLAHPQVRQNAAGKQFTYDAYSEVKGHLEEICGHEITNDAILDAIKVYNKSRAARREFCKLANEHPDLIPASVRATVLRAAYFMLKDEYTEKLEELNKELAAAPAGKFDGHKVVVSGIIYNMPGILKAMDDNKLAIAADDCAYESRSFAVDAPEDLDNGLQALAVQFSKQKNDVLLYDPEFAKNTRSEHVCNLVKESGAEGLIVFMMQFCDPEEMEYPDLKKALDAHHIPHVKIGVDQMTRDFGQAQTALEAFAESL.

Belongs to the FldB/FldC dehydratase alpha/beta subunit family. In terms of assembly, the (R)-2-hydroxyglutaryl-CoA dehydratase enzyme system is a heterodimer composed of an alpha subunit (HgdA) and a beta subunit (HgdB). The cofactor is [4Fe-4S] cluster. FMN serves as cofactor. Requires Mg(2+) as cofactor.

Its subcellular location is the cytoplasm. The catalysed reaction is (R)-2-hydroxyglutaryl-CoA = (2E)-glutaconyl-CoA + H2O. It participates in amino-acid degradation; L-glutamate degradation via hydroxyglutarate pathway; crotonoyl-CoA from L-glutamate: step 4/5. Its activity is regulated as follows. Activated by the HgdC. Reversibly inactivated by oxidants such as 2-nitrophenol, 3-nitrophenol, 4-nitrophenol, 4-nitrobenzoate, carbonyl cyanide 4-(trifluoromethoxy)phenylhydrazone (FCCP) and chloramphenicol. Irreversibly inactivated by oxidants such as hydroxylamine and nitrite. Functionally, involved in the fermentation of L-glutamate via the hydroxyglutarate pathway. Catalyzes the reversible syn-elimination of water from (R)-2-hydroxyglutaryl-CoA to yield (E)-glutaconyl-CoA. The dehydration mechanism involves a transient one electron reduction of the thioester from (R)-2-hydroxyglutaryl-CoA, generating a ketyl radical. Prior to (E)-glutaconyl-CoA formation, the ketyl radical is subsequently reoxidized by electron transfer back to the HgdA-HgdB complex (CompD) to avoid change in oxidation state of the substrate. The appropriate redox state of dehydratase HgdA-HgdB complex (CompD) is maintained by HgdC (CompA) via hydrolysis of ATP and ATP-dependent electron transfer. Since the electron is recycled, the dehydratase is able to perform several turnovers with only catalytic amounts of ATP and substoichiometric amounts of HgdC (CompA). The protein is (R)-2-hydroxyglutaryl-CoA dehydratase, subunit beta of Acidaminococcus fermentans (strain ATCC 25085 / DSM 20731 / CCUG 9996 / CIP 106432 / VR4).